A 153-amino-acid chain; its full sequence is Ribosome maturation factor RimP (153 aa).

It belongs to the RimP family.

The protein resides in the cytoplasm. Its function is as follows. Required for maturation of 30S ribosomal subunits. This chain is Ribosome maturation factor RimP, found in Histophilus somni (strain 2336) (Haemophilus somnus).